Consider the following 74-residue polypeptide: Ubiquitin-like protein FUBI (74 aa).

Belongs to the ubiquitin family.

The chain is Ubiquitin-like protein FUBI (Fau) from Rattus norvegicus (Rat).